Here is a 635-residue protein sequence, read N- to C-terminus: MYDLLKTIDDPAALRRLDRRQLQPLADELRAFVLDSVSQTGGHLSSNLGTVELTIALHYVFDTPHDRIVWDVGHQTYPHKILTGRRDQMHTLRQLGGISGFPKRDESEYDTFGTAHSSTSISAALGMAVASKLKGDNRMGIAVIGDGAMTAGMAFEAMNNAGVEDDVPLLVILNDNDMSISPPVGALNRHLARLMSGRFYAAARAGVERVLRVAPPMLDLARKLEEHAKGMIVPATLFEEFGFNYIGPIDGHDLDSLIPTLQNIKELRGPQFLHVVTKKGQGYKLAEADPVLYHGPGKFNPAEGIKPAATPSKKTYTQVFGEWLCDAAELDARVIGITPAMREGSGMVEFEKRFPDRYFDVGIAEQHAVTFAGGLAAEGMKPVVAIYSTFLQRAYDQLIHDVALQNLPVVFAIDRAGLVGADGATHAGAYDLAFLRCIPNMTVMAASDENECRQMLYTALQQPNPTAVRYPRGAGTGVATIKQMTALPLGKGEIRRETSQPAGKRIAILAFGTMVAPSLAAAEQLDATVANMRFVKPLDADLVRQLAETHDAIVTVEEGCVMGGAGSACVEALLASGVTRPVLQLGLPDRFIDHGDPAKLLAACGLDAVGITKSIRERFLLSGAVGGQSSVKRVA.

Thiamine diphosphate contacts are provided by residues His74 and 115–117 (AHS). Asp146 is a binding site for Mg(2+). Residues 147–148 (GA), Asn176, Tyr283, and Glu365 each bind thiamine diphosphate. Asn176 contacts Mg(2+).

The protein belongs to the transketolase family. DXPS subfamily. Homodimer. Mg(2+) is required as a cofactor. It depends on thiamine diphosphate as a cofactor.

It catalyses the reaction D-glyceraldehyde 3-phosphate + pyruvate + H(+) = 1-deoxy-D-xylulose 5-phosphate + CO2. It functions in the pathway metabolic intermediate biosynthesis; 1-deoxy-D-xylulose 5-phosphate biosynthesis; 1-deoxy-D-xylulose 5-phosphate from D-glyceraldehyde 3-phosphate and pyruvate: step 1/1. In terms of biological role, catalyzes the acyloin condensation reaction between C atoms 2 and 3 of pyruvate and glyceraldehyde 3-phosphate to yield 1-deoxy-D-xylulose-5-phosphate (DXP). In Paraburkholderia xenovorans (strain LB400), this protein is 1-deoxy-D-xylulose-5-phosphate synthase.